The sequence spans 447 residues: Glyceraldehyde-3-phosphate dehydrogenase GAPB, chloroplastic (447 aa).

A chloroplast-targeting transit peptide spans 1 to 80; sequence MATHAALAVS…STPVRGETVA (80 aa). Residues 91–92, Asp115, and Arg160 contribute to the NADP(+) site; that span reads RI. Residues 234–236, Thr265, Arg280, 293–294, and Arg316 contribute to the D-glyceraldehyde 3-phosphate site; these read SCT and TG. The active-site Nucleophile is the Cys235. Asn399 is a binding site for NADP(+).

This sequence belongs to the glyceraldehyde-3-phosphate dehydrogenase family. Tetramer of either four A chains (GAPDH 2) or two A and two B chains (GAPDH 1). In terms of tissue distribution, expressed in leaves and stems.

The protein localises to the plastid. The protein resides in the chloroplast membrane. Its subcellular location is the chloroplast stroma. It catalyses the reaction D-glyceraldehyde 3-phosphate + phosphate + NADP(+) = (2R)-3-phospho-glyceroyl phosphate + NADPH + H(+). It functions in the pathway carbohydrate biosynthesis; Calvin cycle. Involved in the photosynthetic reductive pentose phosphate pathway (Calvin-Benson cycle). Catalyzes the reduction of 1,3-diphosphoglycerate by NADPH. In Arabidopsis thaliana (Mouse-ear cress), this protein is Glyceraldehyde-3-phosphate dehydrogenase GAPB, chloroplastic (GAPB).